The following is a 240-amino-acid chain: MLNLSMKDMIQSGVHFGHQTRYWNPNMKPFIFCKKNKVHIINLEKTLIMFEIAMNELSKISKRDGKILFIGTKRAASEAIKNSAINCNQFFVNYRWLGGMLTNWKTVRQSIKRLKELESQSKDGTFKKLTKKEALIRTRTLNKLENSLGGIKNMGGLPDAIFVIDVEHEKTSIKEANKLGIPIFAIVDTNSNPKDIKFVIPGNDDSIRAIDLYLKTVSETIKNSKISNKEINKKIIIKNN.

Belongs to the universal ribosomal protein uS2 family.

The chain is Small ribosomal subunit protein uS2 from Wigglesworthia glossinidia brevipalpis.